A 469-amino-acid polypeptide reads, in one-letter code: Fe(3+)-Zn(2+) purple acid phosphatase 12 (469 aa).

The signal sequence occupies residues 1–28; that stretch reads MSSRSDLKIKRVSLIIFLLSVLVEFCYG. Asn-114 is a glycosylation site (N-linked (GlcNAc...) asparagine). A Fe cation-binding site is contributed by Asp-168. The N-linked (GlcNAc...) asparagine glycan is linked to Asn-176. Fe cation contacts are provided by Asp-197 and Tyr-200. A Zn(2+)-binding site is contributed by Asp-197. Asn-234 provides a ligand contact to Zn(2+). Residue Asn-234 coordinates substrate. N-linked (GlcNAc...) asparagine glycosylation occurs at Asn-307. Residue His-319 participates in Zn(2+) binding. His-329 functions as the Proton donor in the catalytic mechanism. His-356 is a binding site for Zn(2+). Residue 356 to 358 participates in substrate binding; it reads HVH. Fe cation is bound at residue His-358. Asn-429 carries an N-linked (GlcNAc...) asparagine glycan.

Belongs to the metallophosphoesterase superfamily. Purple acid phosphatase family. Homodimer; disulfide-linked. Fe cation is required as a cofactor. It depends on Zn(2+) as a cofactor. Expressed in roots, stems, leaves, flowers and siliques.

The protein localises to the secreted. It carries out the reaction a phosphate monoester + H2O = an alcohol + phosphate. The polypeptide is Fe(3+)-Zn(2+) purple acid phosphatase 12 (PAP12) (Arabidopsis thaliana (Mouse-ear cress)).